The sequence spans 214 residues: Probable transaldolase (214 aa).

K83 acts as the Schiff-base intermediate with substrate in catalysis.

It belongs to the transaldolase family. Type 3B subfamily.

The protein resides in the cytoplasm. The enzyme catalyses D-sedoheptulose 7-phosphate + D-glyceraldehyde 3-phosphate = D-erythrose 4-phosphate + beta-D-fructose 6-phosphate. The protein operates within carbohydrate degradation; pentose phosphate pathway; D-glyceraldehyde 3-phosphate and beta-D-fructose 6-phosphate from D-ribose 5-phosphate and D-xylulose 5-phosphate (non-oxidative stage): step 2/3. In terms of biological role, transaldolase is important for the balance of metabolites in the pentose-phosphate pathway. The chain is Probable transaldolase from Clostridium tetani (strain Massachusetts / E88).